The sequence spans 526 residues: Trigger factor (526 aa).

In terms of domain architecture, PPIase FKBP-type spans G162–P243. Over residues D425–K460 the composition is skewed to basic and acidic residues. A disordered region spans residues D425–D526. Positions K461–A517 are enriched in basic residues.

The protein belongs to the FKBP-type PPIase family. Tig subfamily.

It is found in the cytoplasm. It catalyses the reaction [protein]-peptidylproline (omega=180) = [protein]-peptidylproline (omega=0). Its function is as follows. Involved in protein export. Acts as a chaperone by maintaining the newly synthesized protein in an open conformation. Functions as a peptidyl-prolyl cis-trans isomerase. The protein is Trigger factor of Corynebacterium jeikeium (strain K411).